The primary structure comprises 274 residues: 4-hydroxy-3-methylbut-2-enyl diphosphate reductase (274 aa).

[4Fe-4S] cluster is bound at residue cysteine 12. 2 residues coordinate (2E)-4-hydroxy-3-methylbut-2-enyl diphosphate: histidine 36 and histidine 70. 2 residues coordinate dimethylallyl diphosphate: histidine 36 and histidine 70. Histidine 36 and histidine 70 together coordinate isopentenyl diphosphate. Cysteine 92 contributes to the [4Fe-4S] cluster binding site. Histidine 120 contributes to the (2E)-4-hydroxy-3-methylbut-2-enyl diphosphate binding site. Histidine 120 provides a ligand contact to dimethylallyl diphosphate. Histidine 120 contributes to the isopentenyl diphosphate binding site. The active-site Proton donor is the glutamate 122. A (2E)-4-hydroxy-3-methylbut-2-enyl diphosphate-binding site is contributed by threonine 158. Position 186 (cysteine 186) interacts with [4Fe-4S] cluster. Positions 214, 215, 216, and 258 each coordinate (2E)-4-hydroxy-3-methylbut-2-enyl diphosphate. 4 residues coordinate dimethylallyl diphosphate: serine 214, serine 215, asparagine 216, and serine 258. Isopentenyl diphosphate-binding residues include serine 214, serine 215, asparagine 216, and serine 258.

It belongs to the IspH family. [4Fe-4S] cluster is required as a cofactor.

It carries out the reaction isopentenyl diphosphate + 2 oxidized [2Fe-2S]-[ferredoxin] + H2O = (2E)-4-hydroxy-3-methylbut-2-enyl diphosphate + 2 reduced [2Fe-2S]-[ferredoxin] + 2 H(+). The enzyme catalyses dimethylallyl diphosphate + 2 oxidized [2Fe-2S]-[ferredoxin] + H2O = (2E)-4-hydroxy-3-methylbut-2-enyl diphosphate + 2 reduced [2Fe-2S]-[ferredoxin] + 2 H(+). It participates in isoprenoid biosynthesis; dimethylallyl diphosphate biosynthesis; dimethylallyl diphosphate from (2E)-4-hydroxy-3-methylbutenyl diphosphate: step 1/1. Its pathway is isoprenoid biosynthesis; isopentenyl diphosphate biosynthesis via DXP pathway; isopentenyl diphosphate from 1-deoxy-D-xylulose 5-phosphate: step 6/6. Functionally, catalyzes the conversion of 1-hydroxy-2-methyl-2-(E)-butenyl 4-diphosphate (HMBPP) into a mixture of isopentenyl diphosphate (IPP) and dimethylallyl diphosphate (DMAPP). Acts in the terminal step of the DOXP/MEP pathway for isoprenoid precursor biosynthesis. The chain is 4-hydroxy-3-methylbut-2-enyl diphosphate reductase from Campylobacter concisus (strain 13826).